The chain runs to 49 residues: Large ribosomal subunit protein bL33A (49 aa).

It belongs to the bacterial ribosomal protein bL33 family.

The polypeptide is Large ribosomal subunit protein bL33A (Lactobacillus delbrueckii subsp. bulgaricus (strain ATCC 11842 / DSM 20081 / BCRC 10696 / JCM 1002 / NBRC 13953 / NCIMB 11778 / NCTC 12712 / WDCM 00102 / Lb 14)).